The primary structure comprises 376 residues: 23S rRNA (uracil(747)-C(5))-methyltransferase RlmC (376 aa).

[4Fe-4S] cluster is bound by residues cysteine 3, cysteine 11, cysteine 14, and cysteine 87. Glutamine 212, phenylalanine 241, glutamate 262, and asparagine 307 together coordinate S-adenosyl-L-methionine. The Nucleophile role is filled by cysteine 334.

Belongs to the class I-like SAM-binding methyltransferase superfamily. RNA M5U methyltransferase family. RlmC subfamily.

The enzyme catalyses uridine(747) in 23S rRNA + S-adenosyl-L-methionine = 5-methyluridine(747) in 23S rRNA + S-adenosyl-L-homocysteine + H(+). Its function is as follows. Catalyzes the formation of 5-methyl-uridine at position 747 (m5U747) in 23S rRNA. In Citrobacter koseri (strain ATCC BAA-895 / CDC 4225-83 / SGSC4696), this protein is 23S rRNA (uracil(747)-C(5))-methyltransferase RlmC.